Reading from the N-terminus, the 301-residue chain is UDP-N-acetylenolpyruvoylglucosamine reductase 1 (301 aa).

Residues 29 to 196 (KIGGPADILI…LEAEFQLQIG (168 aa)) form the FAD-binding PCMH-type domain. Arginine 174 is an active-site residue. Serine 225 serves as the catalytic Proton donor. Glutamate 295 is a catalytic residue.

It belongs to the MurB family. FAD serves as cofactor.

Its subcellular location is the cytoplasm. It carries out the reaction UDP-N-acetyl-alpha-D-muramate + NADP(+) = UDP-N-acetyl-3-O-(1-carboxyvinyl)-alpha-D-glucosamine + NADPH + H(+). The protein operates within cell wall biogenesis; peptidoglycan biosynthesis. In terms of biological role, cell wall formation. The sequence is that of UDP-N-acetylenolpyruvoylglucosamine reductase 1 (murB1) from Bacillus anthracis.